A 136-amino-acid chain; its full sequence is UPF0216 protein PH0358 (136 aa).

Belongs to the UPF0216 family.

This chain is UPF0216 protein PH0358, found in Pyrococcus horikoshii (strain ATCC 700860 / DSM 12428 / JCM 9974 / NBRC 100139 / OT-3).